Here is a 301-residue protein sequence, read N- to C-terminus: Acetyl-coenzyme A carboxylase carboxyl transferase subunit beta (301 aa).

Residues 25–294 (LWIKDPSTGE…NSDAPAPQKP (270 aa)) enclose the CoA carboxyltransferase N-terminal domain.

The protein belongs to the AccD/PCCB family. Acetyl-CoA carboxylase is a heterohexamer composed of biotin carboxyl carrier protein (AccB), biotin carboxylase (AccC) and two subunits each of ACCase subunit alpha (AccA) and ACCase subunit beta (AccD).

The protein localises to the cytoplasm. The enzyme catalyses N(6)-carboxybiotinyl-L-lysyl-[protein] + acetyl-CoA = N(6)-biotinyl-L-lysyl-[protein] + malonyl-CoA. Its pathway is lipid metabolism; malonyl-CoA biosynthesis; malonyl-CoA from acetyl-CoA: step 1/1. In terms of biological role, component of the acetyl coenzyme A carboxylase (ACC) complex. Biotin carboxylase (BC) catalyzes the carboxylation of biotin on its carrier protein (BCCP) and then the CO(2) group is transferred by the transcarboxylase to acetyl-CoA to form malonyl-CoA. This is Acetyl-coenzyme A carboxylase carboxyl transferase subunit beta from Brucella abortus (strain 2308).